The following is a 181-amino-acid chain: Ribulose bisphosphate carboxylase small subunit 2B, chloroplastic (181 aa).

Residues 1 to 54 (MASSMFSSTAVVTSPAQATMVAPFTGLKSSASFPVTRKANNDITSITSNGGRVS) constitute a chloroplast transit peptide.

This sequence belongs to the RuBisCO small chain family. As to quaternary structure, heterohexadecamer of 8 large and 8 small subunits.

It localises to the plastid. Its subcellular location is the chloroplast. RuBisCO catalyzes two reactions: the carboxylation of D-ribulose 1,5-bisphosphate, the primary event in carbon dioxide fixation, as well as the oxidative fragmentation of the pentose substrate. Both reactions occur simultaneously and in competition at the same active site. Although the small subunit is not catalytic it is essential for maximal activity. The protein is Ribulose bisphosphate carboxylase small subunit 2B, chloroplastic (RBCS-2B) of Arabidopsis thaliana (Mouse-ear cress).